Reading from the N-terminus, the 228-residue chain is Clathrin light chain B (228 aa).

Blocked amino end (Met) is present on Met-1. Over residues Met-1–Glu-17 the composition is skewed to low complexity. Residues Met-1 to Asn-80 are disordered. Phosphoserine is present on residues Ser-11 and Ser-13. Positions Ala-92 to Arg-154 are involved in binding clathrin heavy chain. Thr-186 carries the post-translational modification Phosphothreonine. Cys-198 and Cys-208 are oxidised to a cystine. Position 203 is an N6-acetyllysine (Lys-203). Ser-216 carries the post-translational modification Phosphoserine.

The protein belongs to the clathrin light chain family. In terms of assembly, clathrin coats are formed from molecules containing 3 heavy chains and 3 light chains. Interacts (via N-terminus) with HIP1. Interacts with HIP1R.

It localises to the cytoplasmic vesicle membrane. The protein localises to the membrane. Its subcellular location is the coated pit. In terms of biological role, clathrin is the major protein of the polyhedral coat of coated pits and vesicles. In Bos taurus (Bovine), this protein is Clathrin light chain B (CLTB).